Here is a 343-residue protein sequence, read N- to C-terminus: Galactoside alpha-(1,2)-fucosyltransferase 2 (343 aa).

Residues M1–H14 are Cytoplasmic-facing. The chain crosses the membrane as a helical; Signal-anchor for type II membrane protein span at residues F15–V28. Residues Q29–H343 lie on the Lumenal side of the membrane. 3 N-linked (GlcNAc...) asparagine glycosylation sites follow: N188, N282, and N308.

This sequence belongs to the glycosyltransferase 11 family.

The protein localises to the golgi apparatus. Its subcellular location is the golgi stack membrane. The catalysed reaction is a beta-D-galactosyl-(1-&gt;3)-N-acetyl-beta-D-glucosaminyl derivative + GDP-beta-L-fucose = an alpha-L-Fuc-(1-&gt;2)-beta-D-Gal-(1-&gt;3)-beta-D-GlcNAc derivative + GDP + H(+). It catalyses the reaction a beta-D-galactosyl-(1-&gt;4)-N-acetyl-beta-D-glucosaminyl derivative + GDP-beta-L-fucose = an alpha-L-Fuc-(1-&gt;2)-beta-D-Gal-(1-&gt;4)-beta-D-GlcNAc derivative + GDP + H(+). It carries out the reaction a neolactoside nLc4Cer + GDP-beta-L-fucose = a neolactoside IV(2)-alpha-Fuc-nLc4Cer + GDP + H(+). The enzyme catalyses a neolactoside nLc4Cer(d18:1(4E)) + GDP-beta-L-fucose = a neolactoside IV(2)-alpha-Fuc-nLc4Cer(d18:1(4E)) + GDP + H(+). The catalysed reaction is a ganglioside GM1 + GDP-beta-L-fucose = a ganglioside Fuc-GM1 + GDP + H(+). It catalyses the reaction a ganglioside GA1 + GDP-beta-L-fucose = a ganglioside Fuc-GA1 + GDP + H(+). It carries out the reaction Lc4Cer + GDP-beta-L-fucose = alpha-L-fucosyl-(1-&gt;2)-beta-D-galactosyl-(1-&gt;3)-N-acetyl-beta-D-glucosaminyl-(1-&gt;3)-beta-D-galactosyl-(1-&gt;4)-beta-D-glucosyl-(1&lt;-&gt;1')-ceramide + GDP + H(+). The enzyme catalyses a beta-D-Gal-(1-&gt;3)-beta-D-GlcNAc-(1-&gt;3)-beta-D-Gal-(1-&gt;4)-beta-D-Glc-(1&lt;-&gt;1')-Cer(d18:1(4E)) + GDP-beta-L-fucose = alpha-L-fucosyl-(1-&gt;2)- beta-D-galactosyl-(1-&gt;3)-N-acetyl-beta-D-glucosaminyl-(1-&gt;3)-beta-D-galactosyl-(1-&gt;4)-beta-D-glucosyl-(1&lt;-&gt;1')-N-acylsphing-4-enine + GDP + H(+). The catalysed reaction is a ganglioside GD1b + GDP-beta-L-fucose = a ganglioside Fuc-GD1b + GDP + H(+). It catalyses the reaction a ganglioside GM1 (d18:1(4E)) + GDP-beta-L-fucose = a ganglioside Fuc-GM1 (d18:1(4E)) + GDP + H(+). It carries out the reaction a globoside GalGb4Cer (d18:1(4E)) + GDP-beta-L-fucose = a globoside Globo-H (d18:1(4E)) + GDP + H(+). The enzyme catalyses a lactoside III(4)-a-Fuc-Lc4Cer + GDP-beta-L-fucose = a lactoside IV(2),III(4)-a-[Fuc]2-Lc4Cer + GDP + H(+). The catalysed reaction is beta-D-galactosyl-(1-&gt;3)-N-acetyl-D-galactosamine + GDP-beta-L-fucose = alpha-L-fucosyl-(1-&gt;2)-beta-D-galactosyl-(1-&gt;3)-N-acetyl-D-galactosamine + GDP + H(+). It functions in the pathway protein modification; protein glycosylation. Catalyzes the transfer of L-fucose, from a guanosine diphosphate-beta-L-fucose, to the terminal galactose on both O- and N-linked glycans chains of cell surface glycoproteins and glycolipids and the resulting epitope regulates several processes such as cell-cell interaction including host-microbe interaction, cell surface expression and cell proliferation. Preferentially fucosylates gangliosides GA1 and GM1 in the antrum, cecum and colon and in the female reproductive organs. Fucosylated host glycoproteins or glycolipids mediate interaction with intestinal microbiota influencing its composition. Creates a soluble precursor oligosaccharide FuC-alpha ((1,2)Galbeta-) called the H antigen which is an essential substrate for the final step in the soluble ABO blood group antigen synthesis pathway. This Hylobates lar (Lar gibbon) protein is Galactoside alpha-(1,2)-fucosyltransferase 2.